The chain runs to 176 residues: Translation initiation factor IF-3 (176 aa).

Belongs to the IF-3 family. In terms of assembly, monomer.

The protein resides in the cytoplasm. IF-3 binds to the 30S ribosomal subunit and shifts the equilibrium between 70S ribosomes and their 50S and 30S subunits in favor of the free subunits, thus enhancing the availability of 30S subunits on which protein synthesis initiation begins. The sequence is that of Translation initiation factor IF-3 from Streptococcus pyogenes serotype M18 (strain MGAS8232).